A 230-amino-acid polypeptide reads, in one-letter code: Flagellar L-ring protein (230 aa).

A signal peptide spans 1 to 18; the sequence is MNRLNIAVSCLATALLFG. Cys19 is lipidated: N-palmitoyl cysteine. Cys19 carries the S-diacylglycerol cysteine lipid modification.

It belongs to the FlgH family. In terms of assembly, the basal body constitutes a major portion of the flagellar organelle and consists of four rings (L,P,S, and M) mounted on a central rod.

The protein resides in the cell outer membrane. The protein localises to the bacterial flagellum basal body. Its function is as follows. Assembles around the rod to form the L-ring and probably protects the motor/basal body from shearing forces during rotation. The protein is Flagellar L-ring protein of Legionella pneumophila (strain Corby).